A 125-amino-acid polypeptide reads, in one-letter code: Large ribosomal subunit protein bL20 (125 aa).

Belongs to the bacterial ribosomal protein bL20 family.

Functionally, binds directly to 23S ribosomal RNA and is necessary for the in vitro assembly process of the 50S ribosomal subunit. It is not involved in the protein synthesizing functions of that subunit. The sequence is that of Large ribosomal subunit protein bL20 from Rhizorhabdus wittichii (strain DSM 6014 / CCUG 31198 / JCM 15750 / NBRC 105917 / EY 4224 / RW1) (Sphingomonas wittichii).